Consider the following 540-residue polypeptide: 2-isopropylmalate synthase (540 aa).

The region spanning Val8–Glu269 is the Pyruvate carboxyltransferase domain. The Mn(2+) site is built by Asp17, His208, His210, and Asn244. Residues Gln408–Leu540 form a regulatory domain region.

The protein belongs to the alpha-IPM synthase/homocitrate synthase family. LeuA type 1 subfamily. Homodimer. Mn(2+) is required as a cofactor.

The protein localises to the cytoplasm. The enzyme catalyses 3-methyl-2-oxobutanoate + acetyl-CoA + H2O = (2S)-2-isopropylmalate + CoA + H(+). It functions in the pathway amino-acid biosynthesis; L-leucine biosynthesis; L-leucine from 3-methyl-2-oxobutanoate: step 1/4. In terms of biological role, catalyzes the condensation of the acetyl group of acetyl-CoA with 3-methyl-2-oxobutanoate (2-ketoisovalerate) to form 3-carboxy-3-hydroxy-4-methylpentanoate (2-isopropylmalate). The protein is 2-isopropylmalate synthase of Synechococcus sp. (strain WH7803).